Reading from the N-terminus, the 139-residue chain is Coat protein TP2 (139 aa).

The protein localises to the virion. The polypeptide is Coat protein TP2 (Thermoproteus tenax virus 1 (strain KRA1) (TTV1)).